The chain runs to 207 residues: Small ribosomal subunit protein uS4c (207 aa).

A disordered region spans residues 20–52; the sequence is GFSKKIDRNHTPPGQHGWKKKASDQKKSKESQY. Residues 40-52 show a composition bias toward basic and acidic residues; it reads KASDQKKSKESQY. In terms of domain architecture, S4 RNA-binding spans 97–158; the sequence is MRLDNIIYRL…NSQQLIKNYL (62 aa).

Belongs to the universal ribosomal protein uS4 family. Part of the 30S ribosomal subunit. Contacts protein S5. The interaction surface between S4 and S5 is involved in control of translational fidelity.

It localises to the plastid. Its function is as follows. One of the primary rRNA binding proteins, it binds directly to 16S rRNA where it nucleates assembly of the body of the 30S subunit. Functionally, with S5 and S12 plays an important role in translational accuracy. This chain is Small ribosomal subunit protein uS4c (rps4), found in Prototheca wickerhamii.